The following is a 464-amino-acid chain: Fumarate hydratase class II (464 aa).

Substrate contacts are provided by residues 97–99 (SGT), 128–131 (HPND), 138–140 (SSN), and threonine 186. Histidine 187 (proton donor/acceptor) is an active-site residue. The active site involves serine 317. Residues serine 318 and 323 to 325 (KVN) each bind substrate.

It belongs to the class-II fumarase/aspartase family. Fumarase subfamily. As to quaternary structure, homotetramer.

It localises to the cytoplasm. The catalysed reaction is (S)-malate = fumarate + H2O. Its pathway is carbohydrate metabolism; tricarboxylic acid cycle; (S)-malate from fumarate: step 1/1. In terms of biological role, involved in the TCA cycle. Catalyzes the stereospecific interconversion of fumarate to L-malate. The chain is Fumarate hydratase class II from Leptospira interrogans serogroup Icterohaemorrhagiae serovar copenhageni (strain Fiocruz L1-130).